A 249-amino-acid chain; its full sequence is Tumor necrosis factor ligand superfamily member 12 (249 aa).

Residues 1-21 (MAARRSQRRRGRRGEPGTALL) are Cytoplasmic-facing. A helical; Signal-anchor for type II membrane protein membrane pass occupies residues 22–42 (VPLALGLGLALACLGLLLAVV). Residues 43–249 (SLGSRASLSA…LTYFGLFQVH (207 aa)) lie on the Extracellular side of the membrane. Positions 55–85 (PAQEELVAEEDQDPSELNPQTEESQDPAPFL) are disordered. Residues 56–68 (AQEELVAEEDQDP) show a composition bias toward acidic residues. The THD domain maps to 107–248 (IAAHYEVHPR…FLTYFGLFQV (142 aa)). A glycan (N-linked (GlcNAc...) asparagine) is linked at Asn-139. Residues Cys-191 and Cys-210 are joined by a disulfide bond.

It belongs to the tumor necrosis factor family. Homotrimer. Interacts with the angiogenic factor AGGF1/VG5Q. Post-translationally, the soluble form derives from the membrane form by proteolytic processing. In terms of tissue distribution, highly expressed in adult heart, pancreas, skeletal muscle, brain, colon, small intestine, lung, ovary, prostate, spleen, lymph node, appendix and peripheral blood lymphocytes. Low expression in kidney, testis, liver, placenta, thymus and bone marrow. Also detected in fetal kidney, liver, lung and brain.

The protein resides in the cell membrane. It is found in the secreted. Its function is as follows. Binds to FN14 and possibly also to TNRFSF12/APO3. Weak inducer of apoptosis in some cell types. Mediates NF-kappa-B activation. Promotes angiogenesis and the proliferation of endothelial cells. Also involved in induction of inflammatory cytokines. Promotes IL8 secretion. The chain is Tumor necrosis factor ligand superfamily member 12 (TNFSF12) from Homo sapiens (Human).